We begin with the raw amino-acid sequence, 222 residues long: Transmembrane protein 114 (222 aa).

Residues 7–27 form a helical membrane-spanning segment; the sequence is ALAGAAALSGALSFVLLAAAI. Residues Asn54 and Asn88 are each glycosylated (N-linked (GlcNAc...) asparagine). The next 3 helical transmembrane spans lie at 105–125, 133–153, and 188–208; these read FVIL…TGFL, LLLL…LTGI, and LALG…FLAA.

It is found in the cell junction. It localises to the tight junction. Its subcellular location is the lateral cell membrane. The protein localises to the apical cell membrane. In Mus musculus (Mouse), this protein is Transmembrane protein 114.